Reading from the N-terminus, the 183-residue chain is Oligoribonuclease (183 aa).

Residues 9 to 172 (LIWIDLEMTG…DDIRDSISEL (164 aa)) enclose the Exonuclease domain. Residue tyrosine 130 is part of the active site.

The protein belongs to the oligoribonuclease family.

The protein resides in the cytoplasm. Its function is as follows. 3'-to-5' exoribonuclease specific for small oligoribonucleotides. The chain is Oligoribonuclease from Acinetobacter baylyi (strain ATCC 33305 / BD413 / ADP1).